Consider the following 288-residue polypeptide: NAD(P)H quinone oxidoreductase YCP4 (288 aa).

Residues 3 to 192 (IAIIQYSTYG…EIAEKQGEAF (190 aa)) form the Flavodoxin-like domain. Residues 9–13 (STYGH) and 110–164 (VFVS…SPYG) each bind FMN. The disordered stretch occupies residues 202–288 (GSKKTNTTTT…KSSCSKCIIM (87 aa)). Positions 205–254 (KTNTTTTSKSAATSDAAGTTSGTAAGTSAATGAATGTSAPKESTKEASSS) are enriched in low complexity. Residues 261-288 (NGTATRTQQSTKAPETAEKSSCSKCIIM) are compositionally biased toward polar residues.

Belongs to the WrbA family. It depends on FMN as a cofactor.

It localises to the cell membrane. It carries out the reaction a quinone + NADH + H(+) = a quinol + NAD(+). It catalyses the reaction a quinone + NADPH + H(+) = a quinol + NADP(+). Functionally, flavodoxin-like protein (FLP) that plays a role in cell wall integrity, oxidative stress protection and virulence. FLPs act as NAD(P)H quinone oxidoreductases. Reduces ubiquinone (coenzyme Q), enabling it to serve as an antioxidant in the membrane. This Candida albicans (strain SC5314 / ATCC MYA-2876) (Yeast) protein is NAD(P)H quinone oxidoreductase YCP4.